Reading from the N-terminus, the 412-residue chain is Zinc finger protein 260 (412 aa).

C2H2-type zinc fingers lie at residues 27 to 49 (YECNECRKTFSLKQNLVEHKKMH), 55 to 77 (HECTECGKVCSRVSSLTLHLRSH), 83 to 105 (YKCNKCGKAFSQKENFLSHQKHH), 136 to 158 (YACKECGKAFNGKAYLTEHEKIH), 164 to 186 (FECNQCGRAFSQKQYLIKHQNIH), 192 to 214 (FKCSECGKAFSQKENLIIHQRIH), 220 to 242 (YECKGCGKAFIQKSSLIRHQRSH), 248 to 270 (YTCKECGKAFSGKSNLTEHEKIH), 276 to 298 (YKCNECGTIFRQKQYLIKHHNIH), 304 to 326 (YECNKCGKAFSRITSLIVHVRIH), 332 to 354 (YECKVCGKAFCQSSSLTVHMRSH), 360 to 382 (YGCNECGKAFSQFSTLALHMRIH), and 388 to 412 (YQCSECGKAFSQKSHHIRHQRIHTH).

This sequence belongs to the krueppel C2H2-type zinc-finger protein family. As to quaternary structure, binds DNA. Interacts with GATA4.

Its subcellular location is the nucleus. Transcription factor that acts as a cardiac regulator and an effector of alpha1-adrenergic signaling. Binds to PE response elements (PERE) present in the promoter of genes such as ANF/NPPA and acts as a direct transcriptional activator of NPPA. Also acts as a cofactor with GATA4, a key cardiac regulator. The polypeptide is Zinc finger protein 260 (ZNF260) (Homo sapiens (Human)).